The following is a 94-amino-acid chain: Integration host factor subunit beta (94 aa).

It belongs to the bacterial histone-like protein family. Heterodimer of an alpha and a beta chain.

Functionally, this protein is one of the two subunits of integration host factor, a specific DNA-binding protein that functions in genetic recombination as well as in transcriptional and translational control. The chain is Integration host factor subunit beta from Brucella melitensis biotype 2 (strain ATCC 23457).